Reading from the N-terminus, the 452-residue chain is UDP-N-acetylmuramoylalanine--D-glutamate ligase (452 aa).

Gly115–Thr121 contacts ATP.

It belongs to the MurCDEF family.

It localises to the cytoplasm. It catalyses the reaction UDP-N-acetyl-alpha-D-muramoyl-L-alanine + D-glutamate + ATP = UDP-N-acetyl-alpha-D-muramoyl-L-alanyl-D-glutamate + ADP + phosphate + H(+). It participates in cell wall biogenesis; peptidoglycan biosynthesis. Functionally, cell wall formation. Catalyzes the addition of glutamate to the nucleotide precursor UDP-N-acetylmuramoyl-L-alanine (UMA). This chain is UDP-N-acetylmuramoylalanine--D-glutamate ligase, found in Geobacter metallireducens (strain ATCC 53774 / DSM 7210 / GS-15).